Here is a 250-residue protein sequence, read N- to C-terminus: 3-deoxy-manno-octulosonate cytidylyltransferase (250 aa).

The protein belongs to the KdsB family.

The protein resides in the cytoplasm. It catalyses the reaction 3-deoxy-alpha-D-manno-oct-2-ulosonate + CTP = CMP-3-deoxy-beta-D-manno-octulosonate + diphosphate. The protein operates within nucleotide-sugar biosynthesis; CMP-3-deoxy-D-manno-octulosonate biosynthesis; CMP-3-deoxy-D-manno-octulosonate from 3-deoxy-D-manno-octulosonate and CTP: step 1/1. Its pathway is bacterial outer membrane biogenesis; lipopolysaccharide biosynthesis. Activates KDO (a required 8-carbon sugar) for incorporation into bacterial lipopolysaccharide in Gram-negative bacteria. The polypeptide is 3-deoxy-manno-octulosonate cytidylyltransferase (Francisella tularensis subsp. novicida (strain U112)).